We begin with the raw amino-acid sequence, 179 residues long: Large ribosomal subunit protein uL5 (179 aa).

The protein belongs to the universal ribosomal protein uL5 family. In terms of assembly, part of the 50S ribosomal subunit; part of the 5S rRNA/L5/L18/L25 subcomplex. Contacts the 5S rRNA and the P site tRNA. Forms a bridge to the 30S subunit in the 70S ribosome.

Functionally, this is one of the proteins that bind and probably mediate the attachment of the 5S RNA into the large ribosomal subunit, where it forms part of the central protuberance. In the 70S ribosome it contacts protein S13 of the 30S subunit (bridge B1b), connecting the 2 subunits; this bridge is implicated in subunit movement. Contacts the P site tRNA; the 5S rRNA and some of its associated proteins might help stabilize positioning of ribosome-bound tRNAs. The chain is Large ribosomal subunit protein uL5 from Prochlorococcus marinus (strain NATL1A).